We begin with the raw amino-acid sequence, 474 residues long: tRNA-2-methylthio-N(6)-dimethylallyladenosine synthase (474 aa).

The MTTase N-terminal domain occupies 3–120 (QKLHIKTWGC…LPEMINQIRG (118 aa)). The [4Fe-4S] cluster site is built by C12, C49, C83, C157, C161, and C164. One can recognise a Radical SAM core domain in the interval 143 to 375 (KAEGPTAFVS…QQRINNQAAK (233 aa)). The 64-residue stretch at 378-441 (RAMLGTEQRV…TNSLRGDVIR (64 aa)) folds into the TRAM domain.

It belongs to the methylthiotransferase family. MiaB subfamily. In terms of assembly, monomer. It depends on [4Fe-4S] cluster as a cofactor.

The protein localises to the cytoplasm. The enzyme catalyses N(6)-dimethylallyladenosine(37) in tRNA + (sulfur carrier)-SH + AH2 + 2 S-adenosyl-L-methionine = 2-methylsulfanyl-N(6)-dimethylallyladenosine(37) in tRNA + (sulfur carrier)-H + 5'-deoxyadenosine + L-methionine + A + S-adenosyl-L-homocysteine + 2 H(+). Its function is as follows. Catalyzes the methylthiolation of N6-(dimethylallyl)adenosine (i(6)A), leading to the formation of 2-methylthio-N6-(dimethylallyl)adenosine (ms(2)i(6)A) at position 37 in tRNAs that read codons beginning with uridine. This Actinobacillus succinogenes (strain ATCC 55618 / DSM 22257 / CCUG 43843 / 130Z) protein is tRNA-2-methylthio-N(6)-dimethylallyladenosine synthase.